The chain runs to 406 residues: Arginine biosynthesis bifunctional protein ArgJ (406 aa).

Substrate is bound by residues T154, K180, T191, E278, N401, and T406. The active-site Nucleophile is T191.

The protein belongs to the ArgJ family. In terms of assembly, heterotetramer of two alpha and two beta chains.

It localises to the cytoplasm. It catalyses the reaction N(2)-acetyl-L-ornithine + L-glutamate = N-acetyl-L-glutamate + L-ornithine. It carries out the reaction L-glutamate + acetyl-CoA = N-acetyl-L-glutamate + CoA + H(+). It functions in the pathway amino-acid biosynthesis; L-arginine biosynthesis; L-ornithine and N-acetyl-L-glutamate from L-glutamate and N(2)-acetyl-L-ornithine (cyclic): step 1/1. The protein operates within amino-acid biosynthesis; L-arginine biosynthesis; N(2)-acetyl-L-ornithine from L-glutamate: step 1/4. In terms of biological role, catalyzes two activities which are involved in the cyclic version of arginine biosynthesis: the synthesis of N-acetylglutamate from glutamate and acetyl-CoA as the acetyl donor, and of ornithine by transacetylation between N(2)-acetylornithine and glutamate. The polypeptide is Arginine biosynthesis bifunctional protein ArgJ (Gloeobacter violaceus (strain ATCC 29082 / PCC 7421)).